Reading from the N-terminus, the 262-residue chain is Acyl-[acyl-carrier-protein]--UDP-N-acetylglucosamine O-acyltransferase (262 aa).

This sequence belongs to the transferase hexapeptide repeat family. LpxA subfamily. Homotrimer.

The protein resides in the cytoplasm. It catalyses the reaction a (3R)-hydroxyacyl-[ACP] + UDP-N-acetyl-alpha-D-glucosamine = a UDP-3-O-[(3R)-3-hydroxyacyl]-N-acetyl-alpha-D-glucosamine + holo-[ACP]. It functions in the pathway glycolipid biosynthesis; lipid IV(A) biosynthesis; lipid IV(A) from (3R)-3-hydroxytetradecanoyl-[acyl-carrier-protein] and UDP-N-acetyl-alpha-D-glucosamine: step 1/6. Its function is as follows. Involved in the biosynthesis of lipid A, a phosphorylated glycolipid that anchors the lipopolysaccharide to the outer membrane of the cell. This Paraburkholderia xenovorans (strain LB400) protein is Acyl-[acyl-carrier-protein]--UDP-N-acetylglucosamine O-acyltransferase.